Reading from the N-terminus, the 206-residue chain is Peptidyl-tRNA hydrolase (206 aa).

TRNA is bound at residue Tyr19. The Proton acceptor role is filled by His24. Residues Phe70, Asn72, and Asn118 each coordinate tRNA.

This sequence belongs to the PTH family. Monomer.

It is found in the cytoplasm. The catalysed reaction is an N-acyl-L-alpha-aminoacyl-tRNA + H2O = an N-acyl-L-amino acid + a tRNA + H(+). In terms of biological role, hydrolyzes ribosome-free peptidyl-tRNAs (with 1 or more amino acids incorporated), which drop off the ribosome during protein synthesis, or as a result of ribosome stalling. Functionally, catalyzes the release of premature peptidyl moieties from peptidyl-tRNA molecules trapped in stalled 50S ribosomal subunits, and thus maintains levels of free tRNAs and 50S ribosomes. This Synechococcus sp. (strain CC9902) protein is Peptidyl-tRNA hydrolase.